The primary structure comprises 460 residues: Dihydroorotate dehydrogenase (quinone), mitochondrial (460 aa).

The N-terminal 32 residues, 1–32, are a transit peptide targeting the mitochondrion; it reads MAGRAATSSAKWAREFLFRRVSSNPLGATRNC. Residues 53–69 traverse the membrane as a helical segment; it reads ILTGATIGLAIAGGAYV. Residues 141–145 and serine 165 contribute to the FMN site; that span reads AGFDK. Lysine 145 is a substrate binding site. Residue 190-194 participates in substrate binding; the sequence is NRCGF. Positions 213–245 are disordered; it reads RMLAETSATSSSPSDDVKPGGKSGPGILGVNLG. Residues asparagine 243 and asparagine 274 each contribute to the FMN site. 274–279 is a substrate binding site; it reads NVSSPN. Residue serine 277 is the Nucleophile of the active site. The FMN site is built by lysine 319 and serine 347. 348–349 lines the substrate pocket; it reads NT. Residues glycine 371, glycine 400, and 421–422 contribute to the FMN site; that span reads YT.

This sequence belongs to the dihydroorotate dehydrogenase family. Type 2 subfamily. The cofactor is FMN.

The protein localises to the mitochondrion inner membrane. It catalyses the reaction (S)-dihydroorotate + a quinone = orotate + a quinol. It participates in pyrimidine metabolism; UMP biosynthesis via de novo pathway; orotate from (S)-dihydroorotate (quinone route): step 1/1. Its function is as follows. Catalyzes the conversion of dihydroorotate to orotate with quinone as electron acceptor. This chain is Dihydroorotate dehydrogenase (quinone), mitochondrial (PYRD), found in Arabidopsis thaliana (Mouse-ear cress).